The sequence spans 517 residues: Serine hydroxymethyltransferase 2, mitochondrial (517 aa).

The transit peptide at 1 to 31 (MAMASALRRLSSSSNKPLQRLFNGGHLYSMS) directs the protein to the mitochondrion. Residue Lys287 is modified to N6-(pyridoxal phosphate)lysine.

It belongs to the SHMT family. In terms of assembly, homotetramer. Pyridoxal 5'-phosphate is required as a cofactor.

It localises to the mitochondrion. It carries out the reaction (6R)-5,10-methylene-5,6,7,8-tetrahydrofolate + glycine + H2O = (6S)-5,6,7,8-tetrahydrofolate + L-serine. It participates in one-carbon metabolism; tetrahydrofolate interconversion. Its function is as follows. Catalyzes the interconversion of serine and glycine. The chain is Serine hydroxymethyltransferase 2, mitochondrial from Flaveria pringlei.